The sequence spans 100 residues: Small ribosomal subunit protein uS14c (100 aa).

The protein belongs to the universal ribosomal protein uS14 family. In terms of assembly, part of the 30S ribosomal subunit.

It localises to the plastid. It is found in the chloroplast. Functionally, binds 16S rRNA, required for the assembly of 30S particles. The protein is Small ribosomal subunit protein uS14c of Aethionema cordifolium (Lebanon stonecress).